Here is a 498-residue protein sequence, read N- to C-terminus: ATP synthase subunit beta, chloroplastic (498 aa).

172-179 (GGAGVGKT) contributes to the ATP binding site.

Belongs to the ATPase alpha/beta chains family. In terms of assembly, F-type ATPases have 2 components, CF(1) - the catalytic core - and CF(0) - the membrane proton channel. CF(1) has five subunits: alpha(3), beta(3), gamma(1), delta(1), epsilon(1). CF(0) has four main subunits: a(1), b(1), b'(1) and c(9-12).

The protein localises to the plastid. Its subcellular location is the chloroplast thylakoid membrane. The enzyme catalyses ATP + H2O + 4 H(+)(in) = ADP + phosphate + 5 H(+)(out). In terms of biological role, produces ATP from ADP in the presence of a proton gradient across the membrane. The catalytic sites are hosted primarily by the beta subunits. The polypeptide is ATP synthase subunit beta, chloroplastic (Magnolia tripetala (Umbrella-tree)).